Reading from the N-terminus, the 551-residue chain is Hydroxymethylpyrimidine/phosphomethylpyrimidine kinase THI20 (551 aa).

Gln-64 serves as a coordination point for 4-amino-5-hydroxymethyl-2-methylpyrimidine. The Nucleophile role is filled by Cys-468. Residue Glu-540 is the Proton donor of the active site.

It in the N-terminal section; belongs to the ThiD family. This sequence in the C-terminal section; belongs to the thiaminase-2 family.

It catalyses the reaction 4-amino-5-hydroxymethyl-2-methylpyrimidine + ATP = 4-amino-2-methyl-5-(phosphooxymethyl)pyrimidine + ADP + H(+). The catalysed reaction is 4-amino-2-methyl-5-(phosphooxymethyl)pyrimidine + ATP = 4-amino-2-methyl-5-(diphosphooxymethyl)pyrimidine + ADP. The enzyme catalyses thiamine + H2O = 5-(2-hydroxyethyl)-4-methylthiazole + 4-amino-5-hydroxymethyl-2-methylpyrimidine + H(+). The protein operates within cofactor biosynthesis; thiamine diphosphate biosynthesis; 4-amino-2-methyl-5-diphosphomethylpyrimidine from 5-amino-1-(5-phospho-D-ribosyl)imidazole: step 2/3. It functions in the pathway cofactor biosynthesis; thiamine diphosphate biosynthesis; 4-amino-2-methyl-5-diphosphomethylpyrimidine from 5-amino-1-(5-phospho-D-ribosyl)imidazole: step 3/3. In terms of biological role, trifunctional protein with both thiamine biosynthetic and degradative activity. Within the thiamine biosynthesis pathway, catalyzes the phosphorylation of hydroxymethylpyrimidine (HMP) to hydroxymethylpyrimidine phosphate (HMP-P), as well as of HMP-P to HMP-PP. Also has thiaminase II activity and degrades thiamine using water as the nucleophile, resulting only in the formation of HMP (4-amino-2-methyl-5-hydroxymethylpyrimidine) and Thz (4-methyl-5-thiazole ethanol). The chain is Hydroxymethylpyrimidine/phosphomethylpyrimidine kinase THI20 from Saccharomyces cerevisiae (strain ATCC 204508 / S288c) (Baker's yeast).